The sequence spans 206 residues: N-(5'-phosphoribosyl)anthranilate isomerase (206 aa).

It belongs to the TrpF family.

The enzyme catalyses N-(5-phospho-beta-D-ribosyl)anthranilate = 1-(2-carboxyphenylamino)-1-deoxy-D-ribulose 5-phosphate. The protein operates within amino-acid biosynthesis; L-tryptophan biosynthesis; L-tryptophan from chorismate: step 3/5. The chain is N-(5'-phosphoribosyl)anthranilate isomerase from Citrifermentans bemidjiense (strain ATCC BAA-1014 / DSM 16622 / JCM 12645 / Bem) (Geobacter bemidjiensis).